A 168-amino-acid chain; its full sequence is uncharacterized protein (168 aa).

The next 4 helical transmembrane spans lie at 1 to 21 (MFWLLIAILIVQRAAEMAVAR), 41 to 61 (PYIITMHILFFLSLIAEVLLM), 68 to 88 (WWLGIAAVILSVQIVRYWALC), and 123 to 143 (VILEILLIPLLYQAYVTMCLF).

It localises to the cell membrane. This is an uncharacterized protein from Bacillus subtilis (strain 168).